A 185-amino-acid chain; its full sequence is Ribosome-recycling factor (185 aa).

Residues 141-161 are disordered; sequence KQEKDKKISEDDLKRAEKEVQ.

The protein belongs to the RRF family.

The protein localises to the cytoplasm. In terms of biological role, responsible for the release of ribosomes from messenger RNA at the termination of protein biosynthesis. May increase the efficiency of translation by recycling ribosomes from one round of translation to another. This Geotalea uraniireducens (strain Rf4) (Geobacter uraniireducens) protein is Ribosome-recycling factor.